The following is a 238-amino-acid chain: Ribonuclease PH (238 aa).

Residues arginine 86 and glycine 124 to arginine 126 contribute to the phosphate site.

The protein belongs to the RNase PH family. As to quaternary structure, homodimer. Has a tendency to aggregate into multimers. Mg(2+) serves as cofactor.

It carries out the reaction tRNA(n+1) + phosphate = tRNA(n) + a ribonucleoside 5'-diphosphate. Phosphorolytic exoribonuclease that plays an important role in tRNA 3'-end maturation; has no activity on a tRNA precursor with a 3'-terminal phosphate group. In vitro is freely reversible, adds nucleotides to the ends of RNA molecules by using nucleoside diphosphates as substrates, but this may not be physiologically important. Probably plays a role in initiation of 16S rRNA degradation (leading to ribosome degradation) during starvation. The polypeptide is Ribonuclease PH (Escherichia coli (strain K12 / MC4100 / BW2952)).